Reading from the N-terminus, the 452-residue chain is Ketoisovalerate reductase BEA2 (452 aa).

70–75 (GPGNIG) provides a ligand contact to NADP(+). Catalysis depends on lysine 285, which acts as the Proton donor. Substrate is bound by residues asparagine 289, asparagine 293, and serine 393. Glutamate 405 is an NADP(+) binding site.

It belongs to the ketopantoate reductase family.

It carries out the reaction (R)-2-hydroxy-3-methylbutanoate + NADP(+) = 3-methyl-2-oxobutanoate + NADPH + H(+). Its function is as follows. Ketoisovalerate reductase; part of the gene cluster that mediates the biosynthesis of beauvericin (BEA), a non-ribosomal cyclic hexadepsipeptide that shows antibiotic, antifungal, insecticidal, and cancer cell antiproliferative and antihaptotactic activity. Ketoisovalerate reductase BEA2 catalyzes the NADPH-specific reduction of ketoisovaleric acid to hydroxyisovalerate, a precursor for beauvericin biosynthesis. The nonribosomal cyclodepsipeptide synthetase BEA1 then catalyzes the formation of beauvericin via condensation and cyclization of 3 dipeptidol monomers, each composed of one unit of hydroxyisovalerate and one unit of N-methyl-phenylalanine. The polypeptide is Ketoisovalerate reductase BEA2 (Gibberella fujikuroi (strain CBS 195.34 / IMI 58289 / NRRL A-6831) (Bakanae and foot rot disease fungus)).